A 310-amino-acid chain; its full sequence is Homoserine O-acetyltransferase (310 aa).

Catalysis depends on cysteine 142, which acts as the Acyl-thioester intermediate. Lysine 163 and serine 192 together coordinate substrate. Catalysis depends on histidine 235, which acts as the Proton acceptor. Residue glutamate 237 is part of the active site. Arginine 249 is a binding site for substrate.

It belongs to the MetA family.

The protein localises to the cytoplasm. The catalysed reaction is L-homoserine + acetyl-CoA = O-acetyl-L-homoserine + CoA. It participates in amino-acid biosynthesis; L-methionine biosynthesis via de novo pathway; O-acetyl-L-homoserine from L-homoserine: step 1/1. In terms of biological role, transfers an acetyl group from acetyl-CoA to L-homoserine, forming acetyl-L-homoserine. The polypeptide is Homoserine O-acetyltransferase (Lachnospira eligens (strain ATCC 27750 / DSM 3376 / VPI C15-48 / C15-B4) (Eubacterium eligens)).